The primary structure comprises 33 residues: Toxin Bcg III 25.52 (33 aa).

Cysteine 6 and cysteine 28 are joined by a disulfide.

It is found in the secreted. It localises to the nematocyst. The sequence is that of Toxin Bcg III 25.52 from Bunodosoma cangicum (Sea anemone).